The chain runs to 210 residues: Methylthioribulose-1-phosphate dehydratase (210 aa).

Zn(2+) contacts are provided by His94 and His96.

The protein belongs to the aldolase class II family. MtnB subfamily. The cofactor is Zn(2+).

It carries out the reaction 5-(methylsulfanyl)-D-ribulose 1-phosphate = 5-methylsulfanyl-2,3-dioxopentyl phosphate + H2O. It functions in the pathway amino-acid biosynthesis; L-methionine biosynthesis via salvage pathway; L-methionine from S-methyl-5-thio-alpha-D-ribose 1-phosphate: step 2/6. Functionally, catalyzes the dehydration of methylthioribulose-1-phosphate (MTRu-1-P) into 2,3-diketo-5-methylthiopentyl-1-phosphate (DK-MTP-1-P). This chain is Methylthioribulose-1-phosphate dehydratase, found in Yersinia enterocolitica serotype O:8 / biotype 1B (strain NCTC 13174 / 8081).